The primary structure comprises 145 residues: Aspartate 1-decarboxylase (145 aa).

The active-site Schiff-base intermediate with substrate; via pyruvic acid is the serine 26. Serine 26 is subject to Pyruvic acid (Ser). Residue threonine 58 coordinates substrate. Residue tyrosine 59 is the Proton donor of the active site. 74 to 76 (GGA) serves as a coordination point for substrate.

This sequence belongs to the PanD family. Heterooctamer of four alpha and four beta subunits. Pyruvate serves as cofactor. Is synthesized initially as an inactive proenzyme, which is activated by self-cleavage at a specific serine bond to produce a beta-subunit with a hydroxyl group at its C-terminus and an alpha-subunit with a pyruvoyl group at its N-terminus.

The protein resides in the cytoplasm. It catalyses the reaction L-aspartate + H(+) = beta-alanine + CO2. It functions in the pathway cofactor biosynthesis; (R)-pantothenate biosynthesis; beta-alanine from L-aspartate: step 1/1. Its function is as follows. Catalyzes the pyruvoyl-dependent decarboxylation of aspartate to produce beta-alanine. This Synechocystis sp. (strain ATCC 27184 / PCC 6803 / Kazusa) protein is Aspartate 1-decarboxylase.